The sequence spans 533 residues: Laccase-2 (533 aa).

A signal peptide spans 1 to 23 (MFPGARILATLTLALHLLHGAHA). Plastocyanin-like domains lie at 25–171 (IGPA…LSLY), 173–336 (IDNA…LETN), and 382–501 (TAPV…FAED). Cu cation-binding residues include His98, His100, His143, and His145. 2 cysteine pairs are disulfide-bonded: Cys119–Cys516 and Cys151–Cys238. Positions 427, 430, and 432 each coordinate Cu cation. An N-linked (GlcNAc...) (high mannose) asparagine glycan is attached at Asn467. Cu cation-binding residues include His483, Cys484, His485, and His489.

Belongs to the multicopper oxidase family. Cu cation serves as cofactor. N-glycosylated at Asn-467; contains a high-mannose glycan with a varying number of mannose residues.

It is found in the secreted. It catalyses the reaction 4 hydroquinone + O2 = 4 benzosemiquinone + 2 H2O. Its function is as follows. Lignin degradation and detoxification of lignin-derived products. This Pleurotus ostreatus (Oyster mushroom) protein is Laccase-2 (POX2).